A 282-amino-acid polypeptide reads, in one-letter code: 4-hydroxybenzoate octaprenyltransferase (282 aa).

Transmembrane regions (helical) follow at residues 17–37 (IGIL…NQGF), 40–60 (IDLL…GCVI), 90–110 (AFIL…KLPI), 113–133 (FYFA…KRFL), 135–155 (APQL…FIAS), 163–183 (FIVL…MYAM), 207–227 (LIIA…AINK), 231–251 (WFFY…LKLI), and 262–282 (AFLV…LALI).

It belongs to the UbiA prenyltransferase family. Mg(2+) is required as a cofactor.

It localises to the cell inner membrane. The catalysed reaction is all-trans-octaprenyl diphosphate + 4-hydroxybenzoate = 4-hydroxy-3-(all-trans-octaprenyl)benzoate + diphosphate. It participates in cofactor biosynthesis; ubiquinone biosynthesis. In terms of biological role, catalyzes the prenylation of para-hydroxybenzoate (PHB) with an all-trans polyprenyl group. Mediates the second step in the final reaction sequence of ubiquinone-8 (UQ-8) biosynthesis, which is the condensation of the polyisoprenoid side chain with PHB, generating the first membrane-bound Q intermediate 3-octaprenyl-4-hydroxybenzoate. This is 4-hydroxybenzoate octaprenyltransferase from Legionella pneumophila (strain Corby).